An 86-amino-acid polypeptide reads, in one-letter code: Anti-adapter protein IraP (86 aa).

Residues 1-36 (MKNLIAELLVKLAEKEEESKELVAQVEALEIVVTAL) adopt a coiled-coil conformation.

It belongs to the IraP family. Interacts with RssB.

It is found in the cytoplasm. Inhibits RpoS proteolysis by regulating RssB activity, thereby increasing the stability of the sigma stress factor RpoS especially during phosphate starvation, but also in stationary phase and during nitrogen starvation. Its effect on RpoS stability is due to its interaction with RssB, which probably blocks the interaction of RssB with RpoS, and the consequent delivery of the RssB-RpoS complex to the ClpXP protein degradation pathway. The protein is Anti-adapter protein IraP of Cronobacter sakazakii (strain ATCC BAA-894) (Enterobacter sakazakii).